The primary structure comprises 637 residues: Cell division cycle-related protein res1/sct1 (637 aa).

One can recognise an HTH APSES-type domain in the interval 6–112; it reads IHKITYSGVE…YSGSAFMPMS (107 aa). The segment at residues 37-58 is a DNA-binding region (H-T-H motif); the sequence is ATQILKIAELDKPRRTRILEKF. Residues 114–137 form a disordered region; that stretch reads FTPQSNRKPTEAYRRNSPVKKSFS. ANK repeat units lie at residues 236 to 265 and 357 to 386; these read DGHT…NVVA and HGDT…SSSI.

DSC1 contains cdc10 and sct1/res1.

Functionally, acts as a positive regulator of the mitotic cell cycle and as a negative regulator of sexual differentiation. May be involved in the transcriptional regulation of the cdc22 and cdt1 genes. Is an integral component of the DSC1-like complex. The sequence is that of Cell division cycle-related protein res1/sct1 (res1) from Schizosaccharomyces pombe (strain 972 / ATCC 24843) (Fission yeast).